The chain runs to 50 residues: Sperm protamine P1 (50 aa).

The protein belongs to the protamine P1 family. Testis.

It is found in the nucleus. It localises to the chromosome. Functionally, protamines substitute for histones in the chromatin of sperm during the haploid phase of spermatogenesis. They compact sperm DNA into a highly condensed, stable and inactive complex. This chain is Sperm protamine P1 (PRM1), found in Trachypithecus phayrei (Phayre's leaf monkey).